Consider the following 714-residue polypeptide: Polyribonucleotide nucleotidyltransferase (714 aa).

D489 and D495 together coordinate Mg(2+). The region spanning 556 to 615 (PKIDTIKIDVDKIKVVIGKGGETIDKIIAETGVKIDIDEEGNVSIYSSDQDAINRAKEII) is the KH domain. In terms of domain architecture, S1 motif spans 625-693 (GEVYHAKVVR…DKGRIDASMK (69 aa)). The disordered stretch occupies residues 691 to 714 (SMKALVPRPPKPEKSEAKKEGKHD). Basic and acidic residues predominate over residues 700–714 (PKPEKSEAKKEGKHD).

This sequence belongs to the polyribonucleotide nucleotidyltransferase family. It depends on Mg(2+) as a cofactor.

It localises to the cytoplasm. It carries out the reaction RNA(n+1) + phosphate = RNA(n) + a ribonucleoside 5'-diphosphate. Functionally, involved in mRNA degradation. Catalyzes the phosphorolysis of single-stranded polyribonucleotides processively in the 3'- to 5'-direction. The protein is Polyribonucleotide nucleotidyltransferase of Streptococcus equi subsp. equi (strain 4047).